The following is an 82-amino-acid chain: DNA-directed RNA polymerase subunit omega (82 aa).

Belongs to the RNA polymerase subunit omega family. In cyanobacteria the RNAP catalytic core is composed of 2 alpha, 1 beta, 1 beta', 1 gamma and 1 omega subunit. When a sigma factor is associated with the core the holoenzyme is formed, which can initiate transcription.

It carries out the reaction RNA(n) + a ribonucleoside 5'-triphosphate = RNA(n+1) + diphosphate. Functionally, promotes RNA polymerase assembly. Latches the N- and C-terminal regions of the beta' subunit thereby facilitating its interaction with the beta and alpha subunits. This is DNA-directed RNA polymerase subunit omega from Synechococcus sp. (strain CC9902).